A 182-amino-acid chain; its full sequence is RNA pyrophosphohydrolase (182 aa).

One can recognise a Nudix hydrolase domain in the interval 6-149; the sequence is GYRPNVGIIL…KRLVYEQALN (144 aa). A Nudix box motif is present at residues 38-59; it reads GGIKRGETPEEAMFRELYEEVG. A disordered region spans residues 162–182; it reads PRHKKEQEPFSDVVDSVRSEE.

Belongs to the Nudix hydrolase family. RppH subfamily. Requires a divalent metal cation as cofactor.

In terms of biological role, accelerates the degradation of transcripts by removing pyrophosphate from the 5'-end of triphosphorylated RNA, leading to a more labile monophosphorylated state that can stimulate subsequent ribonuclease cleavage. This Dechloromonas aromatica (strain RCB) protein is RNA pyrophosphohydrolase.